The sequence spans 313 residues: ADP-L-glycero-D-manno-heptose-6-epimerase (313 aa).

Residues 10-11, 31-32, Lys38, Lys53, 75-79, and Asn92 each bind NADP(+); these read MI, DN, and EGACS. Tyr139 serves as the catalytic Proton acceptor. An NADP(+)-binding site is contributed by Lys143. Asn174 serves as a coordination point for substrate. NADP(+) is bound by residues Val175 and Lys183. Lys183 (proton acceptor) is an active-site residue. Residues Ser185, His192, 206–209, Arg214, and Tyr277 each bind substrate; that span reads FEGS.

Belongs to the NAD(P)-dependent epimerase/dehydratase family. HldD subfamily. Homopentamer. NADP(+) serves as cofactor.

It catalyses the reaction ADP-D-glycero-beta-D-manno-heptose = ADP-L-glycero-beta-D-manno-heptose. It functions in the pathway nucleotide-sugar biosynthesis; ADP-L-glycero-beta-D-manno-heptose biosynthesis; ADP-L-glycero-beta-D-manno-heptose from D-glycero-beta-D-manno-heptose 7-phosphate: step 4/4. Functionally, catalyzes the interconversion between ADP-D-glycero-beta-D-manno-heptose and ADP-L-glycero-beta-D-manno-heptose via an epimerization at carbon 6 of the heptose. This chain is ADP-L-glycero-D-manno-heptose-6-epimerase, found in Aliivibrio fischeri (strain ATCC 700601 / ES114) (Vibrio fischeri).